A 245-amino-acid chain; its full sequence is Keratin-associated protein 10-12 (245 aa).

A run of 19 repeats spans residues 36 to 40, 41 to 45, 62 to 66, 84 to 88, 94 to 98, 104 to 108, 109 to 113, 114 to 118, 119 to 123, 124 to 128, 131 to 135, 141 to 145, 151 to 155, 156 to 160, 161 to 165, 173 to 177, 183 to 187, 188 to 192, and 214 to 218. A 19 X 5 AA repeats of C-C-X(3) region spans residues 36 to 218; the sequence is CCEPPCCAPA…VPVPSCCVPT (183 aa).

This sequence belongs to the KRTAP type 10 family. Interacts with hair keratins. Restricted to a narrow region of the hair fiber cuticle, lying approximately 20 cell layers above the apex of the dermal papilla of the hair root; not detected in any other tissues.

In terms of biological role, in the hair cortex, hair keratin intermediate filaments are embedded in an interfilamentous matrix, consisting of hair keratin-associated proteins (KRTAP), which are essential for the formation of a rigid and resistant hair shaft through their extensive disulfide bond cross-linking with abundant cysteine residues of hair keratins. The matrix proteins include the high-sulfur and high-glycine-tyrosine keratins. The protein is Keratin-associated protein 10-12 (KRTAP10-12) of Homo sapiens (Human).